A 102-amino-acid chain; its full sequence is ATP-dependent Clp protease adapter protein ClpS (102 aa).

Belongs to the ClpS family. In terms of assembly, binds to the N-terminal domain of the chaperone ClpA.

Its function is as follows. Involved in the modulation of the specificity of the ClpAP-mediated ATP-dependent protein degradation. This chain is ATP-dependent Clp protease adapter protein ClpS, found in Shewanella oneidensis (strain ATCC 700550 / JCM 31522 / CIP 106686 / LMG 19005 / NCIMB 14063 / MR-1).